The sequence spans 129 residues: Putative reactive intermediate deaminase TdcF (129 aa).

Lysine 58 bears the N6-(pyridoxal phosphate)lysine mark. Substrate is bound by residues arginine 105–cysteine 107 and glutamate 120.

It belongs to the RutC family. As to quaternary structure, homotrimer.

Its pathway is amino-acid degradation; L-threonine degradation via propanoate pathway. Functionally, may be a post-translational regulator that controls the metabolic fate of L-threonine or the potentially toxic intermediate 2-ketobutyrate. The chain is Putative reactive intermediate deaminase TdcF (tdcF) from Escherichia coli O6:H1 (strain CFT073 / ATCC 700928 / UPEC).